A 284-amino-acid polypeptide reads, in one-letter code: Bifunctional protein FolD (284 aa).

NADP(+) is bound by residues 165 to 167 and Ser190; that span reads GRS.

It belongs to the tetrahydrofolate dehydrogenase/cyclohydrolase family. In terms of assembly, homodimer.

The catalysed reaction is (6R)-5,10-methylene-5,6,7,8-tetrahydrofolate + NADP(+) = (6R)-5,10-methenyltetrahydrofolate + NADPH. It carries out the reaction (6R)-5,10-methenyltetrahydrofolate + H2O = (6R)-10-formyltetrahydrofolate + H(+). Its pathway is one-carbon metabolism; tetrahydrofolate interconversion. Its function is as follows. Catalyzes the oxidation of 5,10-methylenetetrahydrofolate to 5,10-methenyltetrahydrofolate and then the hydrolysis of 5,10-methenyltetrahydrofolate to 10-formyltetrahydrofolate. This Streptococcus pyogenes serotype M2 (strain MGAS10270) protein is Bifunctional protein FolD.